Consider the following 190-residue polypeptide: Ribosome maturation factor RimM (190 aa).

Residues 95–171 (DPDEFYDHEL…VVMIEPPEGL (77 aa)) enclose the PRC barrel domain. Residues 169 to 190 (EGLLDPDFGDKSNSDNSNSDND) form a disordered region.

This sequence belongs to the RimM family. As to quaternary structure, binds ribosomal protein uS19.

The protein resides in the cytoplasm. An accessory protein needed during the final step in the assembly of 30S ribosomal subunit, possibly for assembly of the head region. Essential for efficient processing of 16S rRNA. May be needed both before and after RbfA during the maturation of 16S rRNA. It has affinity for free ribosomal 30S subunits but not for 70S ribosomes. The protein is Ribosome maturation factor RimM of Rhodococcus erythropolis (strain PR4 / NBRC 100887).